We begin with the raw amino-acid sequence, 485 residues long: MSGGFELQPQDGGPRVALAPGETVIGRGPLLGLHRNPCYYQSSEKSQLLPLKTNIWCWLNPGDHFSLLVDKYIFCVLSTHSEMEMECTLRNSQMLDEDDILNEIPKSSSADLPDKTPSAPRRERSTETAKPQAAANNMSFIGESRDLSKQQPNPSERKRILPAWMLTENSSDQNLSVISGGNNVTWESEKERVCKDKTQVNITQPGKKRLISSGSSESTSAKQDTGKKCKNDDQEESIISSKEMPQSFSAAMLHNTEIDNTKTNPQRSKVPVEALGKVSEHKIITKGSSNEDSTARSCSESYSSTQSKSFCDKPQKSHPEPSSNPPSPECVQAKATDSVPNGSEENKVQRTSCMYGANCYRKNPVHFQHFSHPGDSDYGGVNITCQDEADDRPECPYGASCYRKNPQHKIEYRHSTFPVRSISDEDDNVGQPNEYNLNDSFIDDEEEEYEPTDEDSDWEPEKEDLEKEDMEGLLKEAKKFMKRKK.

The FHA-like domain maps to 1–84 (MSGGFELQPQ…CVLSTHSEME (84 aa)). A Phosphoserine; by ATM modification is found at Ser92. Residues 103–156 (EIPKSSSADLPDKTPSAPRRERSTETAKPQAAANNMSFIGESRDLSKQQPNPSE) form a disordered region. The residue at position 125 (Ser125) is a Phosphoserine. The KBM signature appears at 157–166 (RKRILPAWML). The tract at residues 206-348 (GKKRLISSGS…VPNGSEENKV (143 aa)) is disordered. Composition is skewed to polar residues over residues 212–223 (SSGSSESTSAKQ), 237–249 (SIIS…QSFS), and 286–309 (KGSS…QSKS). Residues 310–319 (FCDKPQKSHP) are compositionally biased toward basic and acidic residues. A glycoprotein is bound by residues Arg350, Tyr355, Tyr360, and Arg361. The segment at 351 to 372 (TSCMYGANCYRKNPVHFQHFSH) adopts a PBZ-type 1 zinc-finger fold. A flexible linker region spans residues 380–390 (GVNITCQDEAD). The PBZ-type 2 zinc finger occupies 393–414 (PECPYGASCYRKNPQHKIEYRH). A glycoprotein contacts are provided by Tyr397, Tyr402, and Arg403. The segment at 420 to 470 (RSISDEDDNVGQPNEYNLNDSFIDDEEEEYEPTDEDSDWEPEKEDLEKEDM) is disordered. Positions 441–469 (FIDDEEEEYEPTDEDSDWEPEKEDLEKED) are enriched in acidic residues. Residues 449–473 (YEPTDEDSDWEPEKEDLEKEDMEGL) carry the NAP1L motif motif.

It belongs to the APLF family. Interacts with LIG4. Interacts with PARP1. Interacts with XRCC4. Interacts (via KBM motif) with XRCC5 and XRCC6; promoting recruitment to DNA damage sites. Interacts with XRCC1. Interacts (via C-terminal disordered region) with histones; interacts with histone H2A, H2B and H3-H4. In terms of processing, poly-ADP-ribosylated. In addition to binding non covalently poly-ADP-ribose via its PBZ-type zinc fingers, the protein is also covalently poly-ADP-ribosylated by PARP1. Post-translationally, phosphorylated in an ATM-dependent manner upon double-strand DNA break.

Its subcellular location is the nucleus. It localises to the chromosome. The protein localises to the cytoplasm. It is found in the cytosol. Histone chaperone involved in single-strand and double-strand DNA break repair. Recruited to sites of DNA damage through interaction with branched poly-ADP-ribose chains, a polymeric post-translational modification synthesized transiently at sites of chromosomal damage to accelerate DNA strand break repair reactions. Following recruitment to DNA damage sites, acts as a histone chaperone that mediates histone eviction during DNA repair and promotes recruitment of histone variant MACROH2A1. Also has a nuclease activity: displays apurinic-apyrimidinic (AP) endonuclease and 3'-5' exonuclease activities in vitro. Also able to introduce nicks at hydroxyuracil and other types of pyrimidine base damage. Together with PARP3, promotes the retention of the LIG4-XRCC4 complex on chromatin and accelerate DNA ligation during non-homologous end-joining (NHEJ). Also acts as a negative regulator of cell pluripotency by promoting histone exchange. Required for the embryo implantation during the epithelial to mesenchymal transition in females. In Bos taurus (Bovine), this protein is Aprataxin and PNK-like factor (APLF).